A 79-amino-acid polypeptide reads, in one-letter code: uncharacterized protein (79 aa).

Positions 1–19 (MKYVALAFVLSLVILQISA) are cleaved as a signal peptide. The disordered stretch occupies residues 52-71 (RGRKSRTQSGRNQGKSTSDS). A compositionally biased stretch (polar residues) spans 58–71 (TQSGRNQGKSTSDS).

As to expression, nacreous layer of shell (at protein level). Expressed primarily in the mantle with highest level in the mantle pallium and lower level in the mantle edge.

It localises to the secreted. This is an uncharacterized protein from Margaritifera margaritifera (Freshwater pearl mussel).